The chain runs to 251 residues: MDWMPPPKPTSPRSPPLLWDWADAAVPGSSSGEVSAAAAAAAAHPGRRRKEKRGRAEEGGGGGGEVRCQVEGCGVELVGVKDYHRKHRVCEAHSKFPRVVVAGQERRFCQQCSRFHALSEFDQKKRSCRRRLYDHNARRRKPQTDVFSYASARPPSSLLFDDNRQISFVWNKAPLSHVRPFAISPWESSSEVGTTDGHIYLDKSHISKSLPAFNTDIDELLPMKDFSAATIWMFFGVLFIRTAQESCMSFH.

Positions 1-15 (MDWMPPPKPTSPRSP) are enriched in pro residues. The segment at 1–64 (MDWMPPPKPT…RAEEGGGGGG (64 aa)) is disordered. Residues 24 to 43 (AAVPGSSSGEVSAAAAAAAA) are compositionally biased toward low complexity. The segment at 65 to 142 (EVRCQVEGCG…YDHNARRRKP (78 aa)) adopts an SBP-type zinc-finger fold. Zn(2+) is bound by residues cysteine 68, cysteine 73, cysteine 90, histidine 93, cysteine 109, cysteine 112, histidine 116, and cysteine 128. The short motif at 125-141 (KRSCRRRLYDHNARRRK) is the Bipartite nuclear localization signal element.

As to expression, expressed in stems, leaf sheaths, and young panicles.

The protein localises to the nucleus. In terms of biological role, trans-acting factor that binds specifically to the consensus nucleotide sequence 5'-TNCGTACAA-3'. May be involved in panicle development. The protein is Squamosa promoter-binding-like protein 4 (SPL4) of Oryza sativa subsp. japonica (Rice).